The following is a 263-amino-acid chain: Shikimate dehydrogenase (NADP(+)) (263 aa).

Shikimate-binding positions include 16–18 and Thr-65; that span reads SKS. The active-site Proton acceptor is the Lys-69. Shikimate is bound by residues Asn-90 and Asp-105. NADP(+)-binding positions include 125 to 129 and Leu-208; that span reads GSGGS. Tyr-210 provides a ligand contact to shikimate. NADP(+) is bound at residue Gly-230.

It belongs to the shikimate dehydrogenase family. Homodimer.

It carries out the reaction shikimate + NADP(+) = 3-dehydroshikimate + NADPH + H(+). The protein operates within metabolic intermediate biosynthesis; chorismate biosynthesis; chorismate from D-erythrose 4-phosphate and phosphoenolpyruvate: step 4/7. Inhibited by curcumin, 3-(2-naphthyloxy)-4-oxo-2-(trifluoromethyl)-4H-chromen-7-yl 3-chlorobenzoate, butyl 2-{[3-(2-naphthyloxy)-4-oxo-2-(trifluoromethyl)-4H-chromen-7-yl]oxy}propanoate, 2-({2-[(2-{[2-(2,3-dimethylanilino)-2-oxoethyl]sulfanyl}-1,3-benzothiazol-6-yl)amino]-2-oxoethyl}sulfanyl)-N-(2-naphthyl)acetamide, and maesaquinone diacetate. Its function is as follows. Involved in the biosynthesis of the chorismate, which leads to the biosynthesis of aromatic amino acids. Catalyzes the reversible NADPH linked reduction of 3-dehydroshikimate (DHSA) to yield shikimate (SA). It can also use NAD to oxidize shikimate. The sequence is that of Shikimate dehydrogenase (NADP(+)) from Helicobacter pylori (Campylobacter pylori).